The sequence spans 266 residues: Glutamate racemase 1 (266 aa).

Substrate contacts are provided by residues 11–12 (DS) and 43–44 (YG). Cys-74 functions as the Proton donor/acceptor in the catalytic mechanism. 75–76 (NT) contributes to the substrate binding site. Cys-182 serves as the catalytic Proton donor/acceptor. Residue 183–184 (TH) participates in substrate binding.

It belongs to the aspartate/glutamate racemases family.

The catalysed reaction is L-glutamate = D-glutamate. Its pathway is cell wall biogenesis; peptidoglycan biosynthesis. In terms of biological role, provides the (R)-glutamate required for cell wall biosynthesis. This Caldanaerobacter subterraneus subsp. tengcongensis (strain DSM 15242 / JCM 11007 / NBRC 100824 / MB4) (Thermoanaerobacter tengcongensis) protein is Glutamate racemase 1.